The primary structure comprises 51 residues: Large ribosomal subunit protein eL39 (51 aa).

This sequence belongs to the eukaryotic ribosomal protein eL39 family. Part of the 50S ribosomal subunit.

The chain is Large ribosomal subunit protein eL39 from Pyrococcus furiosus (strain ATCC 43587 / DSM 3638 / JCM 8422 / Vc1).